Consider the following 326-residue polypeptide: Acetyl-coenzyme A carboxylase carboxyl transferase subunit beta (326 aa).

The CoA carboxyltransferase N-terminal domain maps to 32-301; the sequence is LWTKCPACGV…ILPPLNADSN (270 aa). 4 residues coordinate Zn(2+): Cys-36, Cys-39, Cys-55, and Cys-58. The segment at 36–58 adopts a C4-type zinc-finger fold; it reads CPACGVLTYTKDLQGNWMVCVEC.

This sequence belongs to the AccD/PCCB family. In terms of assembly, acetyl-CoA carboxylase is a heterohexamer composed of biotin carboxyl carrier protein (AccB), biotin carboxylase (AccC) and two subunits each of ACCase subunit alpha (AccA) and ACCase subunit beta (AccD). It depends on Zn(2+) as a cofactor.

Its subcellular location is the cytoplasm. The catalysed reaction is N(6)-carboxybiotinyl-L-lysyl-[protein] + acetyl-CoA = N(6)-biotinyl-L-lysyl-[protein] + malonyl-CoA. It participates in lipid metabolism; malonyl-CoA biosynthesis; malonyl-CoA from acetyl-CoA: step 1/1. Functionally, component of the acetyl coenzyme A carboxylase (ACC) complex. Biotin carboxylase (BC) catalyzes the carboxylation of biotin on its carrier protein (BCCP) and then the CO(2) group is transferred by the transcarboxylase to acetyl-CoA to form malonyl-CoA. The protein is Acetyl-coenzyme A carboxylase carboxyl transferase subunit beta of Synechocystis sp. (strain ATCC 27184 / PCC 6803 / Kazusa).